The chain runs to 140 residues: 3-hydroxyacyl-[acyl-carrier-protein] dehydratase FabZ (140 aa).

H48 is an active-site residue.

It belongs to the thioester dehydratase family. FabZ subfamily.

The protein resides in the cytoplasm. It carries out the reaction a (3R)-hydroxyacyl-[ACP] = a (2E)-enoyl-[ACP] + H2O. In terms of biological role, involved in unsaturated fatty acids biosynthesis. Catalyzes the dehydration of short chain beta-hydroxyacyl-ACPs and long chain saturated and unsaturated beta-hydroxyacyl-ACPs. The sequence is that of 3-hydroxyacyl-[acyl-carrier-protein] dehydratase FabZ from Halalkalibacterium halodurans (strain ATCC BAA-125 / DSM 18197 / FERM 7344 / JCM 9153 / C-125) (Bacillus halodurans).